The following is a 185-amino-acid chain: Elongation factor P (185 aa).

Belongs to the elongation factor P family.

The protein resides in the cytoplasm. It functions in the pathway protein biosynthesis; polypeptide chain elongation. Involved in peptide bond synthesis. Stimulates efficient translation and peptide-bond synthesis on native or reconstituted 70S ribosomes in vitro. Probably functions indirectly by altering the affinity of the ribosome for aminoacyl-tRNA, thus increasing their reactivity as acceptors for peptidyl transferase. In Dictyoglomus thermophilum (strain ATCC 35947 / DSM 3960 / H-6-12), this protein is Elongation factor P.